Here is a 519-residue protein sequence, read N- to C-terminus: ATP synthase subunit alpha 2 (519 aa).

179-186 is an ATP binding site; sequence GDRQTGKT.

It belongs to the ATPase alpha/beta chains family. F-type ATPases have 2 components, CF(1) - the catalytic core - and CF(0) - the membrane proton channel. CF(1) has five subunits: alpha(3), beta(3), gamma(1), delta(1), epsilon(1). CF(0) has three main subunits: a(1), b(2) and c(9-12). The alpha and beta chains form an alternating ring which encloses part of the gamma chain. CF(1) is attached to CF(0) by a central stalk formed by the gamma and epsilon chains, while a peripheral stalk is formed by the delta and b chains.

The protein resides in the cell inner membrane. The enzyme catalyses ATP + H2O + 4 H(+)(in) = ADP + phosphate + 5 H(+)(out). Its function is as follows. Produces ATP from ADP in the presence of a proton gradient across the membrane. The alpha chain is a regulatory subunit. The chain is ATP synthase subunit alpha 2 from Syntrophus aciditrophicus (strain SB).